The chain runs to 182 residues: MADEEDPWGFDDGGEEEKAASTQAGTPAPPSKAPSVASDHKADSVVAGTPANEEAAPEEVEEIKAPPPPPEDDGYRKPVQLYRHWVRPKFLQYKYMYNYRTNYYDDVIDYIDKKQTGVAREIPRPQTWAERVLRTRNISGSDIDSYAPAKRDKQLIQTLAASIRTYNYHTKAYINQRYASVL.

Over residues 1–15 (MADEEDPWGFDDGGE) the composition is skewed to acidic residues. The segment at 1-76 (MADEEDPWGF…PPPPEDDGYR (76 aa)) is disordered.

In terms of processing, several forms of flightin are thought to be produced through post-translational modifications, possibly by phosphorylation. In terms of tissue distribution, found only in indirect flight muscles (IFM).

Functionally, possibly involved in the regulation of flight muscles contraction, possibly by modulating actin-myosin interaction. The protein is Flightin (fln) of Drosophila melanogaster (Fruit fly).